Here is a 272-residue protein sequence, read N- to C-terminus: MYRIIAVDLDGTLLTSENKITKYTKEIIQILIQKKFYFVFASGRHYIDIMKIKDSLKINIFIISSNGSKIYNLDNNLIFSDNLDENIASKLCRIKYSDKEIITQVYQNDQWYINNNKVENNFCSLLSSLQYKYFYPDDLNFKNISKIFFTSRNFQKLHILKRKIINFYGNKVHVNFSIPGCLEIVSGDHLKGYGLKLIANLLGVSLKNCIAFGDGMNDQDMLKVAGKAYIMKNSDPHLKIALPHLEIIESNDNDGVARCLNKIFIENNKEML.

Aspartate 8 functions as the Nucleophile in the catalytic mechanism. Aspartate 8 contributes to the Mg(2+) binding site. Phosphate is bound at residue leucine 9. Aspartate 10 contacts Mg(2+). Residues 42 to 43 (SG) and lysine 191 contribute to the phosphate site. Aspartate 214 contributes to the Mg(2+) binding site. Asparagine 217 serves as a coordination point for phosphate.

It belongs to the HAD-like hydrolase superfamily. Cof family. Requires Mg(2+) as cofactor.

The polypeptide is Putative phosphatase BU028/BU029 (Buchnera aphidicola subsp. Acyrthosiphon pisum (strain APS) (Acyrthosiphon pisum symbiotic bacterium)).